A 946-amino-acid chain; its full sequence is Calcium-transporting ATPase type 2C member 2 (946 aa).

At 1 to 106 (MVEGRVSEFL…DNSEPVWKKY (106 aa)) the chain is on the cytoplasmic side. The segment at 71-95 (VDLHTGLSEFSVTQRRLAHGWNEFV) is interaction with ORAI1. The chain crosses the membrane as a helical span at residues 107 to 127 (LDQFKNPLILLLLGSALVSVL). Over 128 to 129 (TK) the chain is Extracellular. Residues 130 to 150 (EYEDAVSIATAVLVVVTVAFI) traverse the membrane as a helical segment. The Cytoplasmic segment spans residues 151–231 (QEYRSEKSLE…EAEPCSKTDS (81 aa)). Residues 232-252 (PLTGGGDLTTLSNIVFMGTLV) form a helical membrane-spanning segment. At 253–293 (QYGRGQGVVIGTGESSQFGEVFKMMQAEETPKTPLQKSMDR) the chain is on the extracellular side. A Phosphothreonine modification is found at Thr264. Residues Ser267 and Ser268 each carry the phosphoserine modification. Residues 294 to 314 (LGKQLTLFSFGIIGLIMLIGW) traverse the membrane as a helical segment. Residues 315–331 (SQGKQLLSMFTIGVSLA) lie on the Cytoplasmic side of the membrane. Residues Val332, Ala333, Ile335, and Glu337 each coordinate Ca(2+). A helical transmembrane segment spans residues 332-352 (VAAIPEGLPIVVMVTLVLGVL). Over 353 to 750 (RMAKKRVIVK…ISALSLITLS (398 aa)) the chain is Extracellular. Asp379 functions as the 4-aspartylphosphate intermediate in the catalytic mechanism. 2 residues coordinate Mg(2+): Asp674 and Asp678. The helical transmembrane segment at 751–771 (TVFNLPSPLNAMQILWINIIM) threads the bilayer. Ca(2+) contacts are provided by Asn768 and Asp772. Over 772 to 804 (DGPPAQSLGVEPVDKDAFRQPPRSVRDTILSRA) the chain is Cytoplasmic. The chain crosses the membrane as a helical span at residues 805 to 825 (LILKILMSAAIIISGTLFIFW). Over 826–837 (KEMPEDRASTPR) the chain is Extracellular. The chain crosses the membrane as a helical span at residues 838–855 (TTTMTFTCFVFFDLFNAL). Residues 856–874 (TCRSQTKLIFEIGFLRNHM) are Cytoplasmic-facing. Residues 875–895 (FLYSVLGSILGQLAVIYIPPL) form a helical membrane-spanning segment. At 896–905 (QRVFQTENLG) the chain is on the extracellular side. A helical transmembrane segment spans residues 906-926 (ALDLLFLTGLASSVFILSELL). Topologically, residues 927 to 946 (KLCEKYCCSPKRVQMHPEDV) are cytoplasmic.

This sequence belongs to the cation transport ATPase (P-type) (TC 3.A.3) family. Type IIA subfamily. In terms of assembly, interacts (via N-terminus) with ORAI1 (via N- and C-termini); this interaction regulates Ca(2+) influx at the plasma membrane. As to expression, highly expressed in the gastrointestinal and respiratory tracts, prostate, thyroid, salivary, and mammary glands. Expressed in colon epithelial cells (at protein level). Expressed in brain and testis (at protein level).

The protein resides in the golgi apparatus. It localises to the trans-Golgi network membrane. The protein localises to the cell membrane. It is found in the basolateral cell membrane. The catalysed reaction is Ca(2+)(in) + ATP + H2O = Ca(2+)(out) + ADP + phosphate + H(+). It catalyses the reaction Mn(2+)(in) + ATP + H2O = Mn(2+)(out) + ADP + phosphate + H(+). Functionally, ATP-driven pump that supplies the Golgi apparatus with Ca(2+) and Mn(2+) ions, both essential cofactors for processing and trafficking of newly synthesized proteins in the secretory pathway. Within a catalytic cycle, acquires Ca(2+) or Mn(2+) ions on the cytoplasmic side of the membrane and delivers them to the lumenal side. The transfer of ions across the membrane is coupled to ATP hydrolysis and is associated with a transient phosphorylation that shifts the pump conformation from inward-facing to outward-facing state. Induces Ca(2+) influx independently of its ATP-driven pump function. At the basolateral membrane of mammary epithelial cells, interacts with Ca(2+) channel ORAI1 and mediates Ca(2+) entry independently of the Ca(2+) content of endoplasmic reticulum or Golgi stores. May facilitate transepithelial transport of large quantities of Ca(2+) for milk secretion via activation of Ca(2+) influx channels at the plasma membrane and active Ca(2+) transport at the Golgi apparatus. This is Calcium-transporting ATPase type 2C member 2 from Homo sapiens (Human).